A 315-amino-acid polypeptide reads, in one-letter code: Glutamine synthetase nodule isozyme (315 aa).

In terms of domain architecture, GS beta-grasp spans 19 to 99; the sequence is IIAEYIWVGG…VICDTYTPSG (81 aa). The region spanning 106 to 315 is the GS catalytic domain; the sequence is KRHAAAKIFS…WGVANRGASI (210 aa).

Belongs to the glutamine synthetase family. In terms of assembly, homooctamer.

The protein resides in the cytoplasm. The catalysed reaction is L-glutamate + NH4(+) + ATP = L-glutamine + ADP + phosphate + H(+). The sequence is that of Glutamine synthetase nodule isozyme from Lupinus angustifolius (Narrow-leaved blue lupine).